A 160-amino-acid chain; its full sequence is Transcription elongation factor GreA (160 aa).

Positions 49–75 (SEYDEAKNDQAFTEGRIIQLENMLKNA) form a coiled coil.

Belongs to the GreA/GreB family.

Functionally, necessary for efficient RNA polymerase transcription elongation past template-encoded arresting sites. The arresting sites in DNA have the property of trapping a certain fraction of elongating RNA polymerases that pass through, resulting in locked ternary complexes. Cleavage of the nascent transcript by cleavage factors such as GreA or GreB allows the resumption of elongation from the new 3'terminus. GreA releases sequences of 2 to 3 nucleotides. In Clostridium beijerinckii (strain ATCC 51743 / NCIMB 8052) (Clostridium acetobutylicum), this protein is Transcription elongation factor GreA.